The sequence spans 30 residues: Large ribosomal subunit protein bL25 (30 aa).

It belongs to the bacterial ribosomal protein bL25 family. As to quaternary structure, part of the 50S ribosomal subunit; part of the 5S rRNA/L5/L18/L25 subcomplex. Contacts the 5S rRNA. Binds to the 5S rRNA independently of L5 and L18.

Functionally, this is one of the proteins that binds to the 5S RNA in the ribosome where it forms part of the central protuberance. The protein is Large ribosomal subunit protein bL25 (rplY) of Anabaena variabilis.